Reading from the N-terminus, the 523-residue chain is GMP synthase [glutamine-hydrolyzing] (523 aa).

The Glutamine amidotransferase type-1 domain occupies 8-205 (KILILDFGSQ…VVKICGCERN (198 aa)). Catalysis depends on Cys-85, which acts as the Nucleophile. Active-site residues include His-179 and Glu-181. The GMPS ATP-PPase domain maps to 206-398 (WTPENIIEDA…LGLPAEMLNR (193 aa)). ATP is bound at residue 233–239 (SGGVDSS).

Homodimer.

The catalysed reaction is XMP + L-glutamine + ATP + H2O = GMP + L-glutamate + AMP + diphosphate + 2 H(+). Its pathway is purine metabolism; GMP biosynthesis; GMP from XMP (L-Gln route): step 1/1. In terms of biological role, catalyzes the synthesis of GMP from XMP. This Pasteurella multocida (strain Pm70) protein is GMP synthase [glutamine-hydrolyzing].